A 192-amino-acid chain; its full sequence is MNITTADFFCSYSSLNGLPSDGRPEIVFVGRSNVGKSSLLNSLCARKGLAKTSSTPGKTRLINYFIINDNLYFVDLPGYGYAKVGQGERESWGKLLTGYIQKRGEIALVVLLVDSRHPGMASDLEMMEFLDYCGRPFGIVLTKWDKLKQAEKSKASRTIESCAPNARFIVNYSSLSGSGRDRLLASIDTFTQ.

The EngB-type G domain maps to 22-192; that stretch reads GRPEIVFVGR…LLASIDTFTQ (171 aa). Residues 30 to 37, 57 to 61, 75 to 78, 142 to 145, and 172 to 174 each bind GTP; these read GRSNVGKS, GKTRL, DLPG, TKWD, and YSS. 2 residues coordinate Mg(2+): S37 and T59.

The protein belongs to the TRAFAC class TrmE-Era-EngA-EngB-Septin-like GTPase superfamily. EngB GTPase family. The cofactor is Mg(2+).

In terms of biological role, necessary for normal cell division and for the maintenance of normal septation. The chain is Probable GTP-binding protein EngB from Chlorobaculum tepidum (strain ATCC 49652 / DSM 12025 / NBRC 103806 / TLS) (Chlorobium tepidum).